The chain runs to 223 residues: 3,4-dihydroxy-2-butanone 4-phosphate synthase (223 aa).

D-ribulose 5-phosphate is bound by residues 47-48, D52, 160-164, and E184; these read RE and RRGHT. E48 contributes to the Mg(2+) binding site. A Mg(2+)-binding site is contributed by H163.

Belongs to the DHBP synthase family. As to quaternary structure, homodimer. Requires Mg(2+) as cofactor. Mn(2+) serves as cofactor.

It catalyses the reaction D-ribulose 5-phosphate = (2S)-2-hydroxy-3-oxobutyl phosphate + formate + H(+). Its pathway is cofactor biosynthesis; riboflavin biosynthesis; 2-hydroxy-3-oxobutyl phosphate from D-ribulose 5-phosphate: step 1/1. Catalyzes the conversion of D-ribulose 5-phosphate to formate and 3,4-dihydroxy-2-butanone 4-phosphate. In Cupriavidus pinatubonensis (strain JMP 134 / LMG 1197) (Cupriavidus necator (strain JMP 134)), this protein is 3,4-dihydroxy-2-butanone 4-phosphate synthase.